The chain runs to 650 residues: Flap endonuclease 1 (650 aa).

Residues 1 to 106 (MGIKGLTKFI…SELEKRGEKR (106 aa)) are N-domain. D34 contacts Mg(2+). Residues R47 and R72 each contribute to the DNA site. 5 residues coordinate Mg(2+): D88, E160, E162, D181, and D183. Residues 124–266 (EIKKQSGRTV…KTAYNLIKEY (143 aa)) form an I-domain region. E160 contributes to the DNA binding site. The DNA site is built by G244 and D246. Residue D246 coordinates Mg(2+). An interaction with PCNA region spans residues 349–357 (TQRRLDNFF). The disordered stretch occupies residues 371–592 (ETKKEQTLPA…NSYNNIKNNN (222 aa)). Basic and acidic residues-rich tracts occupy residues 413–469 (MKEE…KKSL), 478–502 (DSDKESESGNIIKNEKQNMDDEKIN), and 511–524 (DHSRIRHTENKDNI). The segment covering 525–562 (SDINNNNNNNNNNSSSNNNNISNNHFNSVSSNSTFNSS) has biased composition (low complexity). Over residues 565–581 (LKSEDTLKSNSPLKEDS) the composition is skewed to basic and acidic residues. Low complexity predominate over residues 582–592 (PNSYNNIKNNN).

It belongs to the XPG/RAD2 endonuclease family. FEN1 subfamily. In terms of assembly, interacts with PCNA1 and PCNA2. Three molecules of FEN1 bind to one PCNA trimer with each molecule binding to one PCNA monomer. PCNA stimulates the nuclease activity without altering cleavage specificity. Mg(2+) serves as cofactor. In terms of processing, phosphorylated. Phosphorylation upon DNA damage induces relocalization to the nuclear plasma.

It is found in the nucleus. Its subcellular location is the nucleolus. The protein localises to the nucleoplasm. It localises to the mitochondrion. With respect to regulation, inhibited by monovalent metal ions. In terms of biological role, structure-specific nuclease with 5'-flap endonuclease and 5'-3' exonuclease activities involved in DNA replication and repair. During DNA replication, cleaves the 5'-overhanging flap structure that is generated by displacement synthesis when DNA polymerase encounters the 5'-end of a downstream Okazaki fragment. It enters the flap from the 5'-end and then tracks to cleave the flap base, leaving a nick for ligation. Also involved in the long patch base excision repair (LP-BER) pathway, by cleaving within the apurinic/apyrimidinic (AP) site-terminated flap. Acts as a genome stabilization factor that prevents flaps from equilibrating into structures that lead to duplications and deletions. Also possesses 5'-3' exonuclease activity on nicked or gapped double-stranded DNA, and exhibits RNase H activity. Also involved in replication and repair of rDNA and in repairing mitochondrial DNA. In Plasmodium falciparum, this protein is Flap endonuclease 1.